A 688-amino-acid polypeptide reads, in one-letter code: Lectin-domain containing receptor kinase VI.3 (688 aa).

A signal peptide spans 1–14 (MLVLFLLLTIPTRA). Over 15-306 (QRTTTETPKT…KRGYNSQVLA (292 aa)) the chain is Extracellular. The tract at residues 22–271 (PKTEFIFRGF…AHYVMGWSFS (250 aa)) is legume-lectin like. The chain crosses the membrane as a helical span at residues 307-327 (LIVALSGVTVILLALLFFFVM). Topologically, residues 328 to 688 (YKKRLQQGEV…VSSSSVISGR (361 aa)) are cytoplasmic. In terms of domain architecture, Protein kinase spans 361-640 (FKENRIVGTG…LNGDDDVPEI (280 aa)). Residues 367 to 375 (VGTGGFGTV) and K391 contribute to the ATP site. Residue D490 is the Proton acceptor of the active site. The segment at 662–688 (VSSDRASSSVPSFSVTRVSSSSVISGR) is disordered.

The protein in the C-terminal section; belongs to the protein kinase superfamily. Ser/Thr protein kinase family. This sequence in the N-terminal section; belongs to the leguminous lectin family.

Its subcellular location is the cell membrane. The enzyme catalyses L-seryl-[protein] + ATP = O-phospho-L-seryl-[protein] + ADP + H(+). The catalysed reaction is L-threonyl-[protein] + ATP = O-phospho-L-threonyl-[protein] + ADP + H(+). Its function is as follows. Involved in negative regulation of abscisic acid response in seed germination. This is Lectin-domain containing receptor kinase VI.3 (LECRK63) from Arabidopsis thaliana (Mouse-ear cress).